The primary structure comprises 277 residues: Protein CUSTOS (277 aa).

Disordered regions lie at residues 1 to 81 (MVAP…QTTP), 108 to 182 (TQQA…QRCR), and 238 to 277 (SVNG…EPKN). Residues 9–18 (SDSESSSSDS) show a composition bias toward low complexity. Ser-62 is modified (phosphoserine). Basic and acidic residues predominate over residues 63–72 (RRREVNQHDE). Phosphothreonine is present on Thr-80. Positions 106–141 (KKTQQARLQQEAKEQQEAKEQQAAKEEQAAKKEEDG) form a coiled coil. Positions 115 to 142 (QEAKEQQEAKEQQAAKEEQAAKKEEDGF) are enriched in basic and acidic residues. Ser-158 and Ser-238 each carry phosphoserine. A compositionally biased stretch (basic residues) spans 248-258 (TKKKKKKKAKK). Positions 249–256 (KKKKKKKA) match the Nucleolar localization signal (NLS) motif. The span at 265 to 277 (CPPAECAAAEPKN) shows a compositional bias: low complexity.

It belongs to the CUSTOS family.

The protein localises to the nucleus envelope. Its function is as follows. Plays a role in the regulation of Wnt signaling pathway during early development. This is Protein CUSTOS from Rattus norvegicus (Rat).